Here is a 422-residue protein sequence, read N- to C-terminus: E3 ubiquitin-protein ligase IE2 (422 aa).

Residues 1-10 are compositionally biased toward polar residues; it reads MSRQINAVTP. Disordered regions lie at residues 1–86 and 165–215; these read MSRQ…VQII and SPRS…EGEE. Residues 14 to 26 are compositionally biased toward basic residues; that stretch reads SRRHRLSLSRRRI. Positions 36-63 are enriched in low complexity; that stretch reads PSSSSRSQPSSSSRSQPYSSSRSQPYSS. The span at 71–80 shows a compositional bias: basic and acidic residues; that stretch reads ERSQEQRVSE. Polar residues predominate over residues 179 to 196; the sequence is DVLSQSPDLFDSPQSPQQ. Residues 200 to 215 are compositionally biased toward acidic residues; it reads ELEDEDEEEEEEEGEE. The segment at 220–268 adopts an RING-type; degenerate zinc-finger fold; that stretch reads CNICFTTLKDTKNVDSSFVTSIDCNHAVCFKCYVRIIMDNSTYKCFCSA. Positions 314-414 form a coiled coil; the sequence is IDLNDVERLE…RRNSELVAEL (101 aa).

It belongs to the alphabaculovirus IE2 protein family. Homooligomer. In terms of processing, auto-ubiquitinated.

Its subcellular location is the host nucleus. The enzyme catalyses S-ubiquitinyl-[E2 ubiquitin-conjugating enzyme]-L-cysteine + [acceptor protein]-L-lysine = [E2 ubiquitin-conjugating enzyme]-L-cysteine + N(6)-ubiquitinyl-[acceptor protein]-L-lysine.. In terms of biological role, RING-finger E3 ubiquitin ligase that plays an important regulatory role during the initial stages of infection. Migrates to specific nuclear foci early in infection supposely to prepare the sites for viral replication by targeting and ubiquitinating host proteins. This Bombyx mori nuclear polyhedrosis virus (BmNPV) protein is E3 ubiquitin-protein ligase IE2 (IE2).